The chain runs to 369 residues: Anhydro-N-acetylmuramic acid kinase (369 aa).

Residue 12–19 (GTSMDGVD) coordinates ATP.

The protein belongs to the anhydro-N-acetylmuramic acid kinase family.

It catalyses the reaction 1,6-anhydro-N-acetyl-beta-muramate + ATP + H2O = N-acetyl-D-muramate 6-phosphate + ADP + H(+). Its pathway is amino-sugar metabolism; 1,6-anhydro-N-acetylmuramate degradation. It functions in the pathway cell wall biogenesis; peptidoglycan recycling. Catalyzes the specific phosphorylation of 1,6-anhydro-N-acetylmuramic acid (anhMurNAc) with the simultaneous cleavage of the 1,6-anhydro ring, generating MurNAc-6-P. Is required for the utilization of anhMurNAc either imported from the medium or derived from its own cell wall murein, and thus plays a role in cell wall recycling. The polypeptide is Anhydro-N-acetylmuramic acid kinase (Shewanella halifaxensis (strain HAW-EB4)).